The chain runs to 221 residues: MEVQKEAQRIMTLSVWKMYHSRMQRGGLRLHRSLQLSLVMRSAREVYLSAKVEAHQPEFPPSRRALDPRLHPPREAEVAVEVASPEAVQPPEPMDTQEEVLRVQETPALCDPPPARVSRKRRSSSDLSDGSDAGLVPSKKARLEEVEGEATSEVPDRLQLPPAQSEGAFPNLARVLQRRFSSLLNCGPAVPPPTPPTCEAKPACRPADNMLNVLVRAVVAF.

The residue at position 1 (methionine 1) is an N-acetylmethionine. A disordered region spans residues 105-155 (ETPALCDPPPARVSRKRRSSSDLSDGSDAGLVPSKKARLEEVEGEATSEVP). Over residues 125 to 136 (SDLSDGSDAGLV) the composition is skewed to low complexity.

Belongs to the IER family.

It is found in the cytoplasm. The protein localises to the nucleus. Functionally, DNA-binding protein that seems to act as a transcription factor. Involved in the regulation of neuronal differentiation, acts upon JNK-signaling pathway activation and plays a role in neurite outgrowth in hippocampal cells. May mediate with FIBP FGF-signaling in the establishment of laterality in the embryo. Promotes cell motility, seems to stimulate tumor metastasis. The sequence is that of Immediate early response gene 2 protein (Ier2) from Mus musculus (Mouse).